The primary structure comprises 512 residues: Aldehyde dehydrogenase B (512 aa).

Catalysis depends on residues E268 and C307.

As to quaternary structure, homotetramer.

It catalyses the reaction an aldehyde + NADP(+) + H2O = a carboxylate + NADPH + 2 H(+). It carries out the reaction acetaldehyde + NADP(+) + H2O = acetate + NADPH + 2 H(+). The enzyme catalyses chloroacetaldehyde + NADP(+) + H2O = chloroacetate + NADPH + 2 H(+). The catalysed reaction is propanal + NADP(+) + H2O = propanoate + NADPH + 2 H(+). With respect to regulation, magnesium increases enzyme activity with various substrates. In terms of biological role, catalyzes the NADP(+)-dependent oxidation of diverse aldehydes to their corresponding carboxylic acids, with a preference for acetaldehyde and chloroacetaldehyde. May play a role in detoxifying aldehydes present during stationary phase. Cannot use NAD(+) instead of NADP(+) as the electron acceptor. To a lesser extent is also able to oxidize propionaldehyde (propanal), benzaldehyde, mafosfamide, and 4-hydroperoxycyclophosphamide. Does not use either glyceraldehyde or glycolaldehyde as substrates. This is Aldehyde dehydrogenase B from Escherichia coli (strain K12).